The following is a 372-amino-acid chain: Enoyl-[acyl-carrier-protein] reductase, mitochondrial (372 aa).

A mitochondrion-targeting transit peptide spans 1-18; that stretch reads MSFFKTAVRRFSSTSITR. Tyrosine 72 acts as the Proton donor in catalysis. NADP(+)-binding positions include asparagine 157, 183-186, 206-208, 279-282, 304-306, and lysine 365; these read NSMV, RNR, FGGM, and FWV.

This sequence belongs to the zinc-containing alcohol dehydrogenase family. Quinone oxidoreductase subfamily. Homodimer.

The protein resides in the mitochondrion matrix. It carries out the reaction a 2,3-saturated acyl-[ACP] + NADP(+) = a (2E)-enoyl-[ACP] + NADPH + H(+). In terms of biological role, catalyzes the NADPH-dependent reduction of trans-2-enoyl thioesters in mitochondrial fatty acid synthesis (fatty acid synthesis type II). Fatty acid chain elongation in mitochondria uses acyl carrier protein (ACP) as an acyl group carrier, but the enzyme accepts both ACP and CoA thioesters as substrates in vitro. Required for respiration and the maintenance of the mitochondrial compartment. The polypeptide is Enoyl-[acyl-carrier-protein] reductase, mitochondrial (etr1) (Schizosaccharomyces pombe (strain 972 / ATCC 24843) (Fission yeast)).